The chain runs to 220 residues: Putative GED domain-containing protein DNM1P46 (220 aa).

Residues 18–46 form a disordered region; it reads VSVETRNVKPQGKDSKAEENGSHSFMHSM. The segment covering 28 to 38 has biased composition (basic and acidic residues); sequence QGKDSKAEENG. In terms of domain architecture, GED spans 54–149; sequence METTQNLVDS…CCPTCTRLGT (96 aa). The interval 173–194 is disordered; sequence DTPGGVGRAGTAARRDSRGNEK. Residues 185–194 show a composition bias toward basic and acidic residues; that stretch reads ARRDSRGNEK.

This Homo sapiens (Human) protein is Putative GED domain-containing protein DNM1P46 (DNM1P46).